Here is an 88-residue protein sequence, read N- to C-terminus: Apolipoprotein C-I (88 aa).

The first 26 residues, 1–26 (MRLILSLPVLVVVLSMVLEGPAPAQA), serve as a signal peptide directing secretion.

Belongs to the apolipoprotein C1 family. As to expression, expressed in the liver.

It localises to the secreted. Functionally, inhibitor of lipoprotein binding to the low density lipoprotein (LDL) receptor, LDL receptor-related protein, and very low density lipoprotein (VLDL) receptor. Associates with high density lipoproteins (HDL) and the triacylglycerol-rich lipoproteins in the plasma and makes up about 10% of the protein of the VLDL and 2% of that of HDL. Appears to interfere directly with fatty acid uptake and is also the major plasma inhibitor of cholesteryl ester transfer protein (CETP). Binds free fatty acids and reduces their intracellular esterification. Modulates the interaction of APOE with beta-migrating VLDL and inhibits binding of beta-VLDL to the LDL receptor-related protein. This is Apolipoprotein C-I (APOC1) from Canis lupus familiaris (Dog).